A 336-amino-acid polypeptide reads, in one-letter code: Fructose-1,6-bisphosphatase class 1 (336 aa).

Mg(2+) contacts are provided by Glu90, Asp112, Leu114, and Asp115. Substrate-binding positions include 115–118 (DGSS), Asn207, and Lys273. A Mg(2+)-binding site is contributed by Glu279.

This sequence belongs to the FBPase class 1 family. In terms of assembly, homotetramer. Requires Mg(2+) as cofactor.

The protein localises to the cytoplasm. The enzyme catalyses beta-D-fructose 1,6-bisphosphate + H2O = beta-D-fructose 6-phosphate + phosphate. The protein operates within carbohydrate biosynthesis; gluconeogenesis. The protein is Fructose-1,6-bisphosphatase class 1 of Xanthomonas axonopodis pv. citri (strain 306).